A 209-amino-acid polypeptide reads, in one-letter code: Outer-membrane lipoprotein carrier protein (209 aa).

Residues 1–23 (MKNLLKKSLLGLAFLSLNGFAFA) form the signal peptide.

Belongs to the LolA family. As to quaternary structure, monomer.

It localises to the periplasm. Its function is as follows. Participates in the translocation of lipoproteins from the inner membrane to the outer membrane. Only forms a complex with a lipoprotein if the residue after the N-terminal Cys is not an aspartate (The Asp acts as a targeting signal to indicate that the lipoprotein should stay in the inner membrane). In Glaesserella parasuis serovar 5 (strain SH0165) (Haemophilus parasuis), this protein is Outer-membrane lipoprotein carrier protein.